A 94-amino-acid chain; its full sequence is Sapecin (94 aa).

An N-terminal signal peptide occupies residues 1–23 (MKSFIVLAVTLCLAAFFMGQSVA). The propeptide occupies 24–54 (SPAAAAEESKFVDGLHALKTIEPELHGRYKR). Cystine bridges form between Cys-57-Cys-84, Cys-70-Cys-90, and Cys-74-Cys-92.

This sequence belongs to the invertebrate defensin family. Type 1 subfamily. Hemocytes and fat body.

The protein resides in the secreted. Sapecins, which are potent bactericidal proteins, are produced in response to injury. Sapecin is cytotoxic to Gram-positive bacteria, and to a lesser extent against Gram-negative bacteria. The polypeptide is Sapecin (Sarcophaga peregrina (Flesh fly)).